A 783-amino-acid polypeptide reads, in one-letter code: Rabenosyn-5 (783 aa).

At A2 the chain carries N-acetylalanine. S3 is subject to Phosphoserine. Residues 14–37 form a C2H2-type zinc finger; that stretch reads FLCPLCLKDLQSFYQLQSHYEEEH. A necessary for the correct targeting to endosomes region spans residues 99–262; that stretch reads RSHLSDFKKH…HCKDKLLKRE (164 aa). An FYVE-type zinc finger spans residues 156-259; sequence DQDVPFCPDC…CCTHCKDKLL (104 aa). Residues C162, C165, C178, C181, C186, and C189 each contribute to the Zn(2+) site. Positions 206-223 are enriched in polar residues; it reads KDSLSTHTSPSQSPNSVH. Residues 206–240 form a disordered region; sequence KDSLSTHTSPSQSPNSVHGSRRGSISSMSSVSSVL. 4 positions are modified to phosphoserine: S214, S218, S225, and S229. The segment covering 227–239 has biased composition (low complexity); that stretch reads RGSISSMSSVSSV. Residues C251 and C254 each contribute to the Zn(2+) site. Residues 263 to 499 are necessary for interaction with RAB4A; the sequence is QQMDEKEHTP…QLQDEYDQQQ (237 aa). Residues 263–783 are necessary for interaction with EHD1; sequence QQMDEKEHTP…TLAKQKGAPN (521 aa). Coiled coils occupy residues 377–412 and 471–531; these read TKEQ…KLEE and QAKA…ELER. 2 stretches are compositionally biased toward basic and acidic residues: residues 387–399 and 405–414; these read KRKQ…RTVE and ESRRKLEERQ. Positions 387–433 are disordered; sequence KRKQDLEQKRTVERQAALESRRKLEERQSGLASHTANGDVRSLRGIP. The UIM domain maps to 495–514; that stretch reads YDQQQTEKAIELSRKQAEEE. Disordered regions lie at residues 569 to 638 and 663 to 733; these read SYSL…SPTE and FEED…EEHI. Composition is skewed to polar residues over residues 571–584 and 610–623; these read SLDQ…SSTA and TLPQ…SDKA. Residues 627 to 783 form a necessary for interaction with RAB5A region; it reads PFDEDDLSSP…TLAKQKGAPN (157 aa). A compositionally biased stretch (acidic residues) spans 663–673; that stretch reads FEEDAEEEEVA. S686 is subject to Phosphoserine. A compositionally biased stretch (acidic residues) spans 721 to 733; sequence VDSDSGMEAEEHI.

In terms of assembly, interacts with EHD1, RAB4A, RAB5A, RAB22A, RAB24 and VPS45. Binds simultaneously to RAB4A and RAB5A in vitro. Interacts with RAB4A and RAB5A that has been activated by GTP binding.

It localises to the cell membrane. Its subcellular location is the early endosome membrane. In terms of biological role, rab4/Rab5 effector protein acting in early endocytic membrane fusion and membrane trafficking of recycling endosomes. Required for endosome fusion either homotypically or with clathrin coated vesicles. Plays a role in the lysosomal trafficking of CTSD/cathepsin D from the Golgi to lysosomes. Also promotes the recycling of transferrin directly from early endosomes to the plasma membrane. Binds phospholipid vesicles containing phosphatidylinositol 3-phosphate (PtdInsP3). Plays a role in the recycling of transferrin receptor to the plasma membrane. This chain is Rabenosyn-5, found in Mus musculus (Mouse).